Consider the following 241-residue polypeptide: tRNA pseudouridine synthase B (241 aa).

The active-site Nucleophile is the D45.

This sequence belongs to the pseudouridine synthase TruB family. Type 1 subfamily.

The enzyme catalyses uridine(55) in tRNA = pseudouridine(55) in tRNA. Functionally, responsible for synthesis of pseudouridine from uracil-55 in the psi GC loop of transfer RNAs. The polypeptide is tRNA pseudouridine synthase B (Chlamydia muridarum (strain MoPn / Nigg)).